A 433-amino-acid chain; its full sequence is Enolase (433 aa).

Q163 is a binding site for (2R)-2-phosphoglycerate. The active-site Proton donor is the E205. Mg(2+)-binding residues include D241, E289, and D316. (2R)-2-phosphoglycerate is bound by residues K341, R370, S371, and K392. The active-site Proton acceptor is K341.

The protein belongs to the enolase family. The cofactor is Mg(2+).

The protein localises to the cytoplasm. The protein resides in the secreted. Its subcellular location is the cell surface. It carries out the reaction (2R)-2-phosphoglycerate = phosphoenolpyruvate + H2O. It participates in carbohydrate degradation; glycolysis; pyruvate from D-glyceraldehyde 3-phosphate: step 4/5. Functionally, catalyzes the reversible conversion of 2-phosphoglycerate (2-PG) into phosphoenolpyruvate (PEP). It is essential for the degradation of carbohydrates via glycolysis. This chain is Enolase, found in Treponema denticola (strain ATCC 35405 / DSM 14222 / CIP 103919 / JCM 8153 / KCTC 15104).